A 257-amino-acid chain; its full sequence is Zinc transporter ZupT (257 aa).

A run of 8 helical transmembrane segments spans residues 5–25 (LILT…GVIG), 32–52 (VLAF…LMEM), 61–81 (GMSP…YFAL), 109–129 (AILL…ATYV), 137–157 (LGFG…LAVA), 171–191 (ILWA…TWLI), 195–215 (MISP…MVAL), and 236–256 (GVLC…TAGF). Residues N120 and E123 each coordinate Fe(2+). Zn(2+)-binding residues include E123 and H148. 3 residues coordinate Fe(2+): N149, E152, and E181. E152 is a binding site for Zn(2+).

The protein belongs to the ZIP transporter (TC 2.A.5) family. ZupT subfamily.

Its subcellular location is the cell inner membrane. The enzyme catalyses Zn(2+)(in) = Zn(2+)(out). In terms of biological role, mediates zinc uptake. May also transport other divalent cations. This chain is Zinc transporter ZupT, found in Enterobacter sp. (strain 638).